A 154-amino-acid polypeptide reads, in one-letter code: Superoxide dismutase [Cu-Zn] (154 aa).

Cu cation-binding residues include His-47, His-49, and His-64. A disulfide bridge connects residues Cys-58 and Cys-147. Zn(2+) is bound by residues His-64, His-72, His-81, and Asp-84. Position 121 (His-121) interacts with Cu cation. Arg-144 serves as a coordination point for substrate.

It belongs to the Cu-Zn superoxide dismutase family. In terms of assembly, homodimer. The cofactor is Cu cation. Zn(2+) is required as a cofactor.

Its subcellular location is the cytoplasm. The protein resides in the mitochondrion. It localises to the cell membrane. It catalyses the reaction 2 superoxide + 2 H(+) = H2O2 + O2. Functionally, destroys radicals which are normally produced within the cells and which are toxic to biological systems. Destroys radicals produced by host defense mechanisms. In Cryptococcus neoformans var. grubii serotype A (strain H99 / ATCC 208821 / CBS 10515 / FGSC 9487) (Filobasidiella neoformans var. grubii), this protein is Superoxide dismutase [Cu-Zn].